The chain runs to 574 residues: Proline--tRNA ligase (574 aa).

This sequence belongs to the class-II aminoacyl-tRNA synthetase family. ProS type 1 subfamily. As to quaternary structure, homodimer.

It localises to the cytoplasm. It carries out the reaction tRNA(Pro) + L-proline + ATP = L-prolyl-tRNA(Pro) + AMP + diphosphate. Catalyzes the attachment of proline to tRNA(Pro) in a two-step reaction: proline is first activated by ATP to form Pro-AMP and then transferred to the acceptor end of tRNA(Pro). As ProRS can inadvertently accommodate and process non-cognate amino acids such as alanine and cysteine, to avoid such errors it has two additional distinct editing activities against alanine. One activity is designated as 'pretransfer' editing and involves the tRNA(Pro)-independent hydrolysis of activated Ala-AMP. The other activity is designated 'posttransfer' editing and involves deacylation of mischarged Ala-tRNA(Pro). The misacylated Cys-tRNA(Pro) is not edited by ProRS. The sequence is that of Proline--tRNA ligase from Teredinibacter turnerae (strain ATCC 39867 / T7901).